The sequence spans 497 residues: UDP-N-acetylmuramoyl-L-alanyl-D-glutamate--2,6-diaminopimelate ligase (497 aa).

UDP-N-acetyl-alpha-D-muramoyl-L-alanyl-D-glutamate is bound at residue Ser32. Gly113–Thr119 is an ATP binding site. Residues Thr155–Thr156, Ser182, Gln188, and Arg190 contribute to the UDP-N-acetyl-alpha-D-muramoyl-L-alanyl-D-glutamate site. The residue at position 222 (Lys222) is an N6-carboxylysine. Meso-2,6-diaminopimelate-binding positions include Arg385, Asp409–Arg412, Gly460, and Glu464. A Meso-diaminopimelate recognition motif motif is present at residues Asp409–Arg412.

This sequence belongs to the MurCDEF family. MurE subfamily. Requires Mg(2+) as cofactor. Carboxylation is probably crucial for Mg(2+) binding and, consequently, for the gamma-phosphate positioning of ATP.

Its subcellular location is the cytoplasm. It carries out the reaction UDP-N-acetyl-alpha-D-muramoyl-L-alanyl-D-glutamate + meso-2,6-diaminopimelate + ATP = UDP-N-acetyl-alpha-D-muramoyl-L-alanyl-gamma-D-glutamyl-meso-2,6-diaminopimelate + ADP + phosphate + H(+). The protein operates within cell wall biogenesis; peptidoglycan biosynthesis. Its function is as follows. Catalyzes the addition of meso-diaminopimelic acid to the nucleotide precursor UDP-N-acetylmuramoyl-L-alanyl-D-glutamate (UMAG) in the biosynthesis of bacterial cell-wall peptidoglycan. This chain is UDP-N-acetylmuramoyl-L-alanyl-D-glutamate--2,6-diaminopimelate ligase, found in Thermosynechococcus vestitus (strain NIES-2133 / IAM M-273 / BP-1).